A 197-amino-acid chain; its full sequence is Imidazoleglycerol-phosphate dehydratase (197 aa).

This sequence belongs to the imidazoleglycerol-phosphate dehydratase family.

The protein resides in the cytoplasm. It carries out the reaction D-erythro-1-(imidazol-4-yl)glycerol 3-phosphate = 3-(imidazol-4-yl)-2-oxopropyl phosphate + H2O. It participates in amino-acid biosynthesis; L-histidine biosynthesis; L-histidine from 5-phospho-alpha-D-ribose 1-diphosphate: step 6/9. In Alkalilimnicola ehrlichii (strain ATCC BAA-1101 / DSM 17681 / MLHE-1), this protein is Imidazoleglycerol-phosphate dehydratase.